Here is a 327-residue protein sequence, read N- to C-terminus: Lipoyl synthase (327 aa).

Residues Cys75, Cys80, Cys86, Cys101, Cys105, Cys108, and Ser315 each contribute to the [4Fe-4S] cluster site. A Radical SAM core domain is found at Phe87–Ser304.

This sequence belongs to the radical SAM superfamily. Lipoyl synthase family. [4Fe-4S] cluster is required as a cofactor.

The protein resides in the cytoplasm. The catalysed reaction is [[Fe-S] cluster scaffold protein carrying a second [4Fe-4S](2+) cluster] + N(6)-octanoyl-L-lysyl-[protein] + 2 oxidized [2Fe-2S]-[ferredoxin] + 2 S-adenosyl-L-methionine + 4 H(+) = [[Fe-S] cluster scaffold protein] + N(6)-[(R)-dihydrolipoyl]-L-lysyl-[protein] + 4 Fe(3+) + 2 hydrogen sulfide + 2 5'-deoxyadenosine + 2 L-methionine + 2 reduced [2Fe-2S]-[ferredoxin]. The protein operates within protein modification; protein lipoylation via endogenous pathway; protein N(6)-(lipoyl)lysine from octanoyl-[acyl-carrier-protein]: step 2/2. Catalyzes the radical-mediated insertion of two sulfur atoms into the C-6 and C-8 positions of the octanoyl moiety bound to the lipoyl domains of lipoate-dependent enzymes, thereby converting the octanoylated domains into lipoylated derivatives. The sequence is that of Lipoyl synthase from Variovorax paradoxus (strain S110).